The following is a 353-amino-acid chain: Probable WRKY transcription factor 7 (353 aa).

A disordered region spans residues 117–259 (VEEKKPETSS…SSRCHCSKKR (143 aa)). The span at 158 to 176 (SHNNNNNQNQTKNGSSSSS) shows a compositional bias: low complexity. Composition is skewed to polar residues over residues 184 to 204 (APST…SFMS) and 213 to 229 (THMS…QLSG). The WRKY DNA-binding region spans 275–341 (KMADIPSDEF…YEGDHNHALV (67 aa)).

Belongs to the WRKY group II-d family. In terms of tissue distribution, in young, mature and senescent leaves.

The protein resides in the nucleus. In terms of biological role, transcription factor. Interacts specifically with the W box (5'-(T)TGAC[CT]-3'), a frequently occurring elicitor-responsive cis-acting element. The chain is Probable WRKY transcription factor 7 (WRKY7) from Arabidopsis thaliana (Mouse-ear cress).